The following is a 445-amino-acid chain: Ribosomal protein uS12 methylthiotransferase RimO (445 aa).

In terms of domain architecture, MTTase N-terminal spans 4–119 (IKVALVSLGC…LLESIKVFLK (116 aa)). Positions 13, 48, 82, 156, 160, and 163 each coordinate [4Fe-4S] cluster. The region spanning 142 to 372 (TTPTYTAYVR…MILQQSISKD (231 aa)) is the Radical SAM core domain. In terms of domain architecture, TRAM spans 375–441 (KEKIGKIYEV…EYDLIGVVYN (67 aa)).

Belongs to the methylthiotransferase family. RimO subfamily. Requires [4Fe-4S] cluster as cofactor.

It localises to the cytoplasm. The enzyme catalyses L-aspartate(89)-[ribosomal protein uS12]-hydrogen + (sulfur carrier)-SH + AH2 + 2 S-adenosyl-L-methionine = 3-methylsulfanyl-L-aspartate(89)-[ribosomal protein uS12]-hydrogen + (sulfur carrier)-H + 5'-deoxyadenosine + L-methionine + A + S-adenosyl-L-homocysteine + 2 H(+). Its function is as follows. Catalyzes the methylthiolation of an aspartic acid residue of ribosomal protein uS12. The polypeptide is Ribosomal protein uS12 methylthiotransferase RimO (Clostridium botulinum (strain Langeland / NCTC 10281 / Type F)).